Here is a 1080-residue protein sequence, read N- to C-terminus: Kinesin-like protein KIN-14E (1080 aa).

The tract at residues 1–35 (MDFSWTTGWEKAAADDDEAESAPAPAPPAPSPQEA) is disordered. A coiled-coil region spans residues 247–355 (QTRTSKLISK…KQEQTLLSLE (109 aa)). The Kinesin motor domain occupies 407-729 (NIRVFCRCRP…LNFASRVRRI (323 aa)). 490-497 (GQTGTGKT) serves as a coordination point for ATP. Positions 736 to 893 (KQVDTAELQK…EHHRSVAESK (158 aa)) form a coiled coil. The segment covering 960-970 (AMSEKEQHILR) has biased composition (basic and acidic residues). The disordered stretch occupies residues 960 to 1080 (AMSEKEQHIL…AVNKTRGWVR (121 aa)). The segment covering 971 to 985 (SSDSMNKKVTNNSSI) has biased composition (polar residues). The span at 1047–1059 (TATSKTAAATHKT) shows a compositional bias: low complexity.

It belongs to the TRAFAC class myosin-kinesin ATPase superfamily. Kinesin family. KIN-14 subfamily.

The protein is Kinesin-like protein KIN-14E of Oryza sativa subsp. japonica (Rice).